The sequence spans 223 residues: Putative lipoprotein NMB1126/NMB1164 (223 aa).

An N-terminal signal peptide occupies residues 1-19 (MKTVSTAVVLAAAAVSLTG). The N-palmitoyl cysteine moiety is linked to residue cysteine 20. The S-diacylglycerol cysteine moiety is linked to residue cysteine 20.

It localises to the cell membrane. This chain is Putative lipoprotein NMB1126/NMB1164, found in Neisseria meningitidis serogroup B (strain ATCC BAA-335 / MC58).